The following is a 79-amino-acid chain: uncharacterized protein (79 aa).

Belongs to the BolA/IbaG family.

This is an uncharacterized protein from Buchnera aphidicola subsp. Baizongia pistaciae (strain Bp).